The chain runs to 167 residues: uncharacterized protein (167 aa).

Residues 148-167 form a disordered region; sequence NKESRGENDGGEERESANIY.

This is an uncharacterized protein from Homo sapiens (Human).